The primary structure comprises 742 residues: Polyphosphate kinase (742 aa).

Asn91 is a binding site for ATP. Positions 431 and 461 each coordinate Mg(2+). His491 serves as the catalytic Phosphohistidine intermediate. Residues Tyr524, Arg624, and His652 each contribute to the ATP site. A disordered region spans residues 718–742 (WTASPQEGHSVRDHQESLMERHRSP). Residues 726 to 742 (HSVRDHQESLMERHRSP) show a composition bias toward basic and acidic residues.

The protein belongs to the polyphosphate kinase 1 (PPK1) family. Mg(2+) serves as cofactor. An intermediate of this reaction is the autophosphorylated ppk in which a phosphate is covalently linked to a histidine residue through a N-P bond.

It carries out the reaction [phosphate](n) + ATP = [phosphate](n+1) + ADP. Functionally, catalyzes the reversible transfer of the terminal phosphate of ATP to form a long-chain polyphosphate (polyP). This Mycobacterium bovis (strain ATCC BAA-935 / AF2122/97) protein is Polyphosphate kinase.